The chain runs to 292 residues: NAC domain-containing protein 105 (292 aa).

In terms of domain architecture, NAC spans 12–162 (IPPGFRFHPT…GWVVCRAFKK (151 aa)). The DNA-binding element occupies 112-168 (IGMRKTLVFYRGRAPNGQKSDWIIHEYYSLESHQNSPPQEEGWVVCRAFKKRTTIPT). Polar residues predominate over residues 237-259 (LPQLESPSLPSEITPHSTTFSEN). The tract at residues 237-269 (LPQLESPSLPSEITPHSTTFSENSSRKDDMSSE) is disordered. The span at 260–269 (SSRKDDMSSE) shows a compositional bias: basic and acidic residues.

It belongs to the plant vascular related NAC-domain protein family. In terms of assembly, interacts with NAC030/VND7. In terms of tissue distribution, detected in root protoxylem and metaxylem poles and in vessels of protoxylems, outermost metaxylems, inner metaxylems, shoots and hypocotyls. Expressed in roots, hypocotyls, cotyledons and leaves. Present in developing xylems. Present in root developing xylems. Specifically expressed in vessels but not in interfascicular fibers in stems.

It is found in the nucleus. Functionally, transcription activator that binds to the secondary wall NAC binding element (SNBE), 5'-(T/A)NN(C/T)(T/C/G)TNNNNNNNA(A/C)GN(A/C/T)(A/T)-3', in the promoter of target genes. Involved in xylem formation by promoting the expression of secondary wall-associated transcription factors and of genes involved in secondary wall biosynthesis and programmed cell death, genes driven by the secondary wall NAC binding element (SNBE). Triggers thickening of secondary walls. The protein is NAC domain-containing protein 105 of Arabidopsis thaliana (Mouse-ear cress).